The sequence spans 141 residues: Hemoglobin subunit alpha (141 aa).

The Globin domain occupies Val-1 to Arg-141. A Phosphoserine modification is found at Ser-3. N6-succinyllysine occurs at positions 7 and 11. An N6-acetyllysine; alternate modification is found at Lys-16. Position 16 is an N6-succinyllysine; alternate (Lys-16). The residue at position 24 (Tyr-24) is a Phosphotyrosine. At Lys-40 the chain carries N6-succinyllysine. Position 49 is a phosphoserine (Ser-49). His-58 provides a ligand contact to O2. His-87 provides a ligand contact to heme b. Residue Ser-102 is modified to Phosphoserine. Phosphothreonine is present on Thr-108. A Phosphoserine modification is found at Ser-131. A phosphothreonine mark is found at Thr-134 and Thr-137. Ser-138 is modified (phosphoserine).

The protein belongs to the globin family. In terms of assembly, heterotetramer of two alpha chains and two beta chains. In terms of tissue distribution, red blood cells.

Involved in oxygen transport from the lung to the various peripheral tissues. Functionally, hemopressin acts as an antagonist peptide of the cannabinoid receptor CNR1. Hemopressin-binding efficiently blocks cannabinoid receptor CNR1 and subsequent signaling. This Crocuta crocuta (Spotted hyena) protein is Hemoglobin subunit alpha (HBA).